The primary structure comprises 231 residues: Acyl-protein thioesterase 1 (231 aa).

Active-site charge relay system residues include S121, D178, and H211.

Belongs to the AB hydrolase superfamily. AB hydrolase 2 family.

Its subcellular location is the cytoplasm. It is found in the nucleus. The enzyme catalyses S-hexadecanoyl-L-cysteinyl-[protein] + H2O = L-cysteinyl-[protein] + hexadecanoate + H(+). Hydrolyzes fatty acids from S-acylated cysteine residues in proteins with a strong preference for palmitoylated G-alpha proteins over other acyl substrates. Mediates the deacylation of G-alpha proteins such as GPA1 in vivo, but has weak or no activity toward palmitoylated Ras proteins. Has weak lysophospholipase activity in vitro; however such activity may not exist in vivo. The protein is Acyl-protein thioesterase 1 of Candida albicans (strain SC5314 / ATCC MYA-2876) (Yeast).